A 233-amino-acid chain; its full sequence is 2-C-methyl-D-erythritol 4-phosphate cytidylyltransferase (233 aa).

Belongs to the IspD/TarI cytidylyltransferase family. IspD subfamily.

It carries out the reaction 2-C-methyl-D-erythritol 4-phosphate + CTP + H(+) = 4-CDP-2-C-methyl-D-erythritol + diphosphate. Its pathway is isoprenoid biosynthesis; isopentenyl diphosphate biosynthesis via DXP pathway; isopentenyl diphosphate from 1-deoxy-D-xylulose 5-phosphate: step 2/6. Catalyzes the formation of 4-diphosphocytidyl-2-C-methyl-D-erythritol from CTP and 2-C-methyl-D-erythritol 4-phosphate (MEP). The polypeptide is 2-C-methyl-D-erythritol 4-phosphate cytidylyltransferase (Lachnoclostridium phytofermentans (strain ATCC 700394 / DSM 18823 / ISDg) (Clostridium phytofermentans)).